The primary structure comprises 3163 residues: Genome polyprotein (3163 aa).

The 144-residue stretch at 219-362 (KMSDQGVDML…KTMSLKIVHF (144 aa)) folds into the Peptidase S30 domain. Residues H270, D279, and S313 each act as for P1 proteinase activity in the active site. The Involved in interaction with stylet and aphid transmission motif lies at 414 to 417 (KITC). An Involved in virions binding and aphid transmission motif is present at residues 672–674 (PTK). One can recognise a Peptidase C6 domain in the interval 698–820 (MYIAKEGYCY…ESSLKHYRVG (123 aa)). Residues C706 and H779 each act as for helper component proteinase activity in the active site. The Helicase ATP-binding domain maps to 1300 to 1452 (KIAHESDKDI…TQYPVSISTE (153 aa)). 1313 to 1320 (GAVGSGKS) is a binding site for ATP. The DEAH box motif lies at 1402–1405 (DECH). One can recognise a Helicase C-terminal domain in the interval 1471–1630 (DVISKGDNIL…GLPVITNNVS (160 aa)). Residues 1871–1888 (STNEMSKFLQLKGKWNKT) are Cytoplasmic-facing. A helical membrane pass occupies residues 1889–1909 (LITRDVLVICGVLGGGVWMVV). At 1910 to 1923 (QHFRSKVSEPVTHE) the chain is on the lumenal side. Residues 1964–1971 (KKGKSKGR) carry the Nuclear localization signal motif. Residues 1983–2017 (INMYGFDPEDFSAVRFVDPLTGATLDDNPFTDITL) form a binding to host eIF(iso)4E region. Position 1986 is an O-(5'-phospho-RNA)-tyrosine (Y1986). A Peptidase C4 domain is found at 2116-2334 (SNSMFRGLRD…ISWGSLNIQA (219 aa)). Active-site for nuclear inclusion protein A activity residues include H2161, D2196, and C2266. The RdRp catalytic domain occupies 2600 to 2724 (WVYCDADGSQ…SVHPEYEYIL (125 aa)). The segment at 2883-2934 (DLTEEQKQAEKEKKEREKAEKERERQKQLAFKKGKDVAQEEGKRDKEVNAGT) is disordered. Positions 2886-2930 (EEQKQAEKEKKEREKAEKERERQKQLAFKKGKDVAQEEGKRDKEV) are enriched in basic and acidic residues.

The protein belongs to the potyviridae genome polyprotein family. In terms of assembly, interacts with host eIF4E protein (via cap-binding region); this interaction mediates the translation of the VPg-viral RNA conjugates. Part of a complex that comprises VPg, RNA, host EIF4E and EIF4G; this interaction mediates the translation of the VPg-viral RNA conjugates. Interacts, via N-terminal region, with host Sec24a protein in COPII-coated vesicles. This binding triggers the formation of host endoplasmic reticulum (ER)-derived viral vesicles involved in cell-to-cell viral movement. VPg is uridylylated by the polymerase and is covalently attached to the 5'-end of the genomic RNA. This uridylylated form acts as a nucleotide-peptide primer for the polymerase. In terms of processing, potyviral RNA is expressed as two polyproteins which undergo post-translational proteolytic processing. Genome polyprotein is processed by NIa-pro, P1 and HC-pro proteinases resulting in the production of at least ten individual proteins. P3N-PIPO polyprotein is cleaved by P1 and HC-pro proteinases resulting in the production of three individual proteins. The P1 proteinase and the HC-pro cleave only their respective C-termini autocatalytically. 6K1 is essential for proper proteolytic separation of P3 from CI.

It is found in the host cytoplasm. Its subcellular location is the host nucleus. The protein resides in the host cytoplasmic vesicle. It localises to the host membrane. The protein localises to the virion. The enzyme catalyses RNA(n) + a ribonucleoside 5'-triphosphate = RNA(n+1) + diphosphate. It carries out the reaction Hydrolyzes glutaminyl bonds, and activity is further restricted by preferences for the amino acids in P6 - P1' that vary with the species of potyvirus, e.g. Glu-Xaa-Xaa-Tyr-Xaa-Gln-|-(Ser or Gly) for the enzyme from tobacco etch virus. The natural substrate is the viral polyprotein, but other proteins and oligopeptides containing the appropriate consensus sequence are also cleaved.. It catalyses the reaction Hydrolyzes a Gly-|-Gly bond at its own C-terminus, commonly in the sequence -Tyr-Xaa-Val-Gly-|-Gly, in the processing of the potyviral polyprotein.. Its function is as follows. Cysteine protease that cleaves a Gly-Gly dipeptide at its own C-terminus. Required for aphid transmission and also has proteolytic activity. Interacts with virions and aphid stylets. Acts as a suppressor of RNA-mediated gene silencing, also known as post-transcriptional gene silencing (PTGS), a mechanism of plant viral defense that limits the accumulation of viral RNAs. May have RNA-binding activity. Functionally, has helicase activity. It may be involved in replication. In terms of biological role, indispensable for virus replication. Responsible for the formation of peripheral motile host endoplasmic reticulum (ER)-derived viral vesicles called 'viral factories', seat of the viral RNA (vRNA) replication and carrying vRNA to plasmodesmata for delivery into adjacent non-infected cells; this process relies on host Sec24a-binding. Its function is as follows. Mediates the cap-independent, EIF4E-dependent translation of viral genomic RNAs. Binds to the cap-binding site of host EIF4E and thus interferes with the host EIF4E-dependent mRNA export and translation. VPg-RNA directly binds EIF4E and is a template for transcription. Also forms trimeric complexes with EIF4E-EIF4G, which are templates for translation. Functionally, has RNA-binding and proteolytic activities. In terms of biological role, RNA-dependent RNA polymerase that ensures transcription and replication of viral RNA (vRNA). Involved in aphid transmission, cell-to-cell and systemis movement, encapsidation of the viral RNA and in the regulation of viral RNA amplification. In Brassica (TuMV), this protein is Genome polyprotein.